We begin with the raw amino-acid sequence, 207 residues long: MARYIGPKAKLSRREGTDLFLKSARRSLADKCKLDSKPGQHGRTSGARTSDYGNQLREKQKVKRIYGVLERQFRRYFAEADRRKGNTGENLLQLLESRLDNVVYRMGFGSTRAEARQLVSHKAILVNGETLNVPSAQIKSGDIVSVREQSKKQVRIAEALSLAEQSGFPTWVAVDAKKFEGTYKQAPDRADISGDINESLIVELYSR.

Positions 31–54 (KCKLDSKPGQHGRTSGARTSDYGN) are disordered. Polar residues predominate over residues 42 to 53 (GRTSGARTSDYG). Residues 97–160 (SRLDNVVYRM…KKQVRIAEAL (64 aa)) form the S4 RNA-binding domain.

The protein belongs to the universal ribosomal protein uS4 family. Part of the 30S ribosomal subunit. Contacts protein S5. The interaction surface between S4 and S5 is involved in control of translational fidelity.

Its function is as follows. One of the primary rRNA binding proteins, it binds directly to 16S rRNA where it nucleates assembly of the body of the 30S subunit. Functionally, with S5 and S12 plays an important role in translational accuracy. The chain is Small ribosomal subunit protein uS4 from Cupriavidus metallidurans (strain ATCC 43123 / DSM 2839 / NBRC 102507 / CH34) (Ralstonia metallidurans).